A 592-amino-acid polypeptide reads, in one-letter code: Insulin-like growth factor 2 mRNA-binding protein 2 (592 aa).

2 RRM domains span residues 3-76 (NKLY…YSVS) and 82-157 (RRIQ…YIPD). S11 is modified (phosphoserine). Positions 157–182 (DEEVSSPSPPHRAREQGHGPGSSSQA) are disordered. Phosphoserine occurs at positions 162 and 164. 4 consecutive KH domains span residues 186-251 (DFPL…CRMI), 267-334 (EVPL…EIEI), 420-485 (QETV…QGRI), and 502-568 (KLEA…QRKI). Position 543 is a phosphothreonine (T543).

Belongs to the RRM IMP/VICKZ family. Can form homooligomers and heterooligomers with IGF2BP1 and IGF2BP3 in an RNA-dependent manner. Interacts with HNRPD. Interacts with IGF2BP1. Interacts with ELAVL1, DHX9, HNRNPU, MATR3 and PABPC1. Expressed in oocytes, granulosa cells of small and growing follicles and Leydig cells of the testis (at protein level). Expressed in testis and ovary.

The protein resides in the nucleus. The protein localises to the cytoplasm. Its subcellular location is the P-body. It localises to the stress granule. In terms of biological role, RNA-binding factor that recruits target transcripts to cytoplasmic protein-RNA complexes (mRNPs). This transcript 'caging' into mRNPs allows mRNA transport and transient storage. It also modulates the rate and location at which target transcripts encounter the translational apparatus and shields them from endonuclease attacks or microRNA-mediated degradation. Preferentially binds to N6-methyladenosine (m6A)-containing mRNAs and increases their stability. Binds to the 5'-UTR of the insulin-like growth factor 2 (IGF2) mRNAs. Binding is isoform-specific. Binds to beta-actin/ACTB and MYC transcripts. Increases MYC mRNA stability by binding to the coding region instability determinant (CRD) and binding is enhanced by m6A-modification of the CRD. The chain is Insulin-like growth factor 2 mRNA-binding protein 2 (Igf2bp2) from Mus musculus (Mouse).